A 347-amino-acid chain; its full sequence is tRNA(Ile)-lysidine synthase (347 aa).

27–32 (SGGADS) provides a ligand contact to ATP. The interval 243–263 (AAPASPSHVEGEASAPHDAAH) is disordered.

Belongs to the tRNA(Ile)-lysidine synthase family.

The protein localises to the cytoplasm. It carries out the reaction cytidine(34) in tRNA(Ile2) + L-lysine + ATP = lysidine(34) in tRNA(Ile2) + AMP + diphosphate + H(+). Ligates lysine onto the cytidine present at position 34 of the AUA codon-specific tRNA(Ile) that contains the anticodon CAU, in an ATP-dependent manner. Cytidine is converted to lysidine, thus changing the amino acid specificity of the tRNA from methionine to isoleucine. This Nitratidesulfovibrio vulgaris (strain ATCC 29579 / DSM 644 / CCUG 34227 / NCIMB 8303 / VKM B-1760 / Hildenborough) (Desulfovibrio vulgaris) protein is tRNA(Ile)-lysidine synthase.